Consider the following 706-residue polypeptide: Elongation factor G (706 aa).

Positions 15-291 constitute a tr-type G domain; sequence LKTRNIGISA…GVLDYLASPV (277 aa). Residues 24–31, 91–95, and 145–148 contribute to the GTP site; these read AHIDSGKT, DTPGH, and NKLD.

The protein belongs to the TRAFAC class translation factor GTPase superfamily. Classic translation factor GTPase family. EF-G/EF-2 subfamily.

The protein localises to the cytoplasm. Functionally, catalyzes the GTP-dependent ribosomal translocation step during translation elongation. During this step, the ribosome changes from the pre-translocational (PRE) to the post-translocational (POST) state as the newly formed A-site-bound peptidyl-tRNA and P-site-bound deacylated tRNA move to the P and E sites, respectively. Catalyzes the coordinated movement of the two tRNA molecules, the mRNA and conformational changes in the ribosome. This chain is Elongation factor G, found in Leptospira borgpetersenii serovar Hardjo-bovis (strain JB197).